The following is a 403-amino-acid chain: Argininosuccinate synthase (403 aa).

10 to 18 (AYSGGLDTS) provides a ligand contact to ATP. Residue tyrosine 87 coordinates L-citrulline. Glycine 117 contributes to the ATP binding site. L-aspartate contacts are provided by threonine 119, asparagine 123, and aspartate 124. Asparagine 123 provides a ligand contact to L-citrulline. L-citrulline contacts are provided by arginine 127, serine 175, serine 184, glutamate 260, and tyrosine 272.

Belongs to the argininosuccinate synthase family. Type 1 subfamily. As to quaternary structure, homotetramer.

Its subcellular location is the cytoplasm. It catalyses the reaction L-citrulline + L-aspartate + ATP = 2-(N(omega)-L-arginino)succinate + AMP + diphosphate + H(+). It participates in amino-acid biosynthesis; L-arginine biosynthesis; L-arginine from L-ornithine and carbamoyl phosphate: step 2/3. In Bacillus licheniformis (strain ATCC 14580 / DSM 13 / JCM 2505 / CCUG 7422 / NBRC 12200 / NCIMB 9375 / NCTC 10341 / NRRL NRS-1264 / Gibson 46), this protein is Argininosuccinate synthase.